The sequence spans 305 residues: Ornithine carbamoyltransferase (305 aa).

Carbamoyl phosphate-binding positions include 52–55, Q79, R103, and 130–133; these read STRT and HPCQ. Residues N161, D222, and 226–227 contribute to the L-ornithine site; that span reads SM. Carbamoyl phosphate is bound by residues 262 to 263 and R290; that span reads CL.

Belongs to the aspartate/ornithine carbamoyltransferase superfamily. OTCase family.

It localises to the cytoplasm. The enzyme catalyses carbamoyl phosphate + L-ornithine = L-citrulline + phosphate + H(+). It participates in amino-acid biosynthesis; L-arginine biosynthesis; L-arginine from L-ornithine and carbamoyl phosphate: step 1/3. Functionally, reversibly catalyzes the transfer of the carbamoyl group from carbamoyl phosphate (CP) to the N(epsilon) atom of ornithine (ORN) to produce L-citrulline. The chain is Ornithine carbamoyltransferase from Pelobacter propionicus (strain DSM 2379 / NBRC 103807 / OttBd1).